The sequence spans 76 residues: UPF0291 protein Aflv_1503 (76 aa).

The tract at residues 56 to 76 (DPNGNDVTPQKLKDSKKKRLH) is disordered.

The protein belongs to the UPF0291 family.

The protein resides in the cytoplasm. In Anoxybacillus flavithermus (strain DSM 21510 / WK1), this protein is UPF0291 protein Aflv_1503.